The chain runs to 592 residues: V-type ATP synthase alpha chain (592 aa).

Residue 232–239 (GPFGAGKT) participates in ATP binding.

The protein belongs to the ATPase alpha/beta chains family.

It catalyses the reaction ATP + H2O + 4 H(+)(in) = ADP + phosphate + 5 H(+)(out). In terms of biological role, produces ATP from ADP in the presence of a proton gradient across the membrane. The V-type alpha chain is a catalytic subunit. In Clostridium botulinum (strain Alaska E43 / Type E3), this protein is V-type ATP synthase alpha chain.